A 621-amino-acid chain; its full sequence is 1,4-alpha-glucan branching enzyme GlgB (621 aa).

Residue aspartate 302 is the Nucleophile of the active site. The Proton donor role is filled by glutamate 355.

It belongs to the glycosyl hydrolase 13 family. GlgB subfamily. Monomer.

It carries out the reaction Transfers a segment of a (1-&gt;4)-alpha-D-glucan chain to a primary hydroxy group in a similar glucan chain.. It participates in glycan biosynthesis; glycogen biosynthesis. Its function is as follows. Catalyzes the formation of the alpha-1,6-glucosidic linkages in glycogen by scission of a 1,4-alpha-linked oligosaccharide from growing alpha-1,4-glucan chains and the subsequent attachment of the oligosaccharide to the alpha-1,6 position. The polypeptide is 1,4-alpha-glucan branching enzyme GlgB (Dechloromonas aromatica (strain RCB)).